The sequence spans 116 residues: Large ribosomal subunit protein uL18 (116 aa).

This sequence belongs to the universal ribosomal protein uL18 family. As to quaternary structure, part of the 50S ribosomal subunit; part of the 5S rRNA/L5/L18/L25 subcomplex. Contacts the 5S and 23S rRNAs.

Functionally, this is one of the proteins that bind and probably mediate the attachment of the 5S RNA into the large ribosomal subunit, where it forms part of the central protuberance. This is Large ribosomal subunit protein uL18 from Pseudomonas putida (strain GB-1).